The chain runs to 147 residues: Large ribosomal subunit protein bL9 (147 aa).

It belongs to the bacterial ribosomal protein bL9 family.

Functionally, binds to the 23S rRNA. The sequence is that of Large ribosomal subunit protein bL9 from Cytophaga hutchinsonii (strain ATCC 33406 / DSM 1761 / CIP 103989 / NBRC 15051 / NCIMB 9469 / D465).